A 361-amino-acid polypeptide reads, in one-letter code: Chorismate synthase (361 aa).

Arg-48 and Arg-54 together coordinate NADP(+). FMN contacts are provided by residues Arg-125–Ser-127, Asn-238–Ala-239, Gly-278, Lys-293–Ser-297, and Arg-319.

It belongs to the chorismate synthase family. In terms of assembly, homotetramer. FMNH2 serves as cofactor.

It catalyses the reaction 5-O-(1-carboxyvinyl)-3-phosphoshikimate = chorismate + phosphate. It functions in the pathway metabolic intermediate biosynthesis; chorismate biosynthesis; chorismate from D-erythrose 4-phosphate and phosphoenolpyruvate: step 7/7. Its function is as follows. Catalyzes the anti-1,4-elimination of the C-3 phosphate and the C-6 proR hydrogen from 5-enolpyruvylshikimate-3-phosphate (EPSP) to yield chorismate, which is the branch point compound that serves as the starting substrate for the three terminal pathways of aromatic amino acid biosynthesis. This reaction introduces a second double bond into the aromatic ring system. The chain is Chorismate synthase from Vibrio vulnificus (strain CMCP6).